A 151-amino-acid chain; its full sequence is Ribosomal RNA large subunit methyltransferase H (151 aa).

Residues glycine 100 and 119 to 124 (LSRMTF) contribute to the S-adenosyl-L-methionine site.

This sequence belongs to the RNA methyltransferase RlmH family. In terms of assembly, homodimer.

It is found in the cytoplasm. It carries out the reaction pseudouridine(1915) in 23S rRNA + S-adenosyl-L-methionine = N(3)-methylpseudouridine(1915) in 23S rRNA + S-adenosyl-L-homocysteine + H(+). In terms of biological role, specifically methylates the pseudouridine at position 1915 (m3Psi1915) in 23S rRNA. The chain is Ribosomal RNA large subunit methyltransferase H from Thermotoga neapolitana (strain ATCC 49049 / DSM 4359 / NBRC 107923 / NS-E).